Here is a 255-residue protein sequence, read N- to C-terminus: Syntaxin-6 (255 aa).

An N-acetylserine modification is found at serine 2. Serine 2 bears the Phosphoserine mark. The interval 2–168 (SMEDPFFVVK…QAQQQLIVEQ (167 aa)) is required for interaction with VPS51. The Cytoplasmic segment spans residues 2–234 (SMEDPFFVVK…VSHMTSDRRQ (233 aa)). A coiled-coil region spans residues 41 to 74 (EEIDWTTNELRNNLRSIEWDLEDLDETISIVEAN). 2 positions are modified to phosphoserine: serine 129 and serine 152. The t-SNARE coiled-coil homology domain occupies 163 to 225 (QLIVEQQDEQ…DNVMKKLAKV (63 aa)). Residues 235 to 255 (WCAIAILFAVLVVVLILFLVL) form a helical; Anchor for type IV membrane protein membrane-spanning segment.

This sequence belongs to the syntaxin family. Identified in a complex containing STX6, STX12 and VAMP4. This complex also includes VTI1A. Binds EEA1. Interacts with VPS45A and GOPC. Interacts with MARCHF2; the interaction promotes MARCHF2-mediated ubiquitination and degradation of CFTR. Interacts with MARCHF3. Interacts with BLTP3B (via C-terminal coiled-coil domain). Interacts with BAIAP3; this interaction is increased in the presence of calcium. Interacts with VPS13B.

The protein localises to the golgi apparatus membrane. It is found in the golgi apparatus. The protein resides in the trans-Golgi network membrane. Its subcellular location is the recycling endosome membrane. Its function is as follows. SNARE promoting movement of transport vesicles to target membranes. Targets endosomes to the trans-Golgi network, and may therefore function in retrograde trafficking. Together with SNARE STX12, promotes movement of vesicles from endosomes to the cell membrane, and may therefore function in the endocytic recycling pathway. This chain is Syntaxin-6 (Stx6), found in Mus musculus (Mouse).